The following is a 184-amino-acid chain: Threonylcarbamoyl-AMP synthase (184 aa).

The 184-residue stretch at 1-184 (MNNLENIVEQ…IFTQHIFRQG (184 aa)) folds into the YrdC-like domain.

This sequence belongs to the SUA5 family. TsaC subfamily.

The protein resides in the cytoplasm. It carries out the reaction L-threonine + hydrogencarbonate + ATP = L-threonylcarbamoyladenylate + diphosphate + H2O. In terms of biological role, required for the formation of a threonylcarbamoyl group on adenosine at position 37 (t(6)A37) in tRNAs that read codons beginning with adenine. Catalyzes the conversion of L-threonine, HCO(3)(-)/CO(2) and ATP to give threonylcarbamoyl-AMP (TC-AMP) as the acyladenylate intermediate, with the release of diphosphate. The chain is Threonylcarbamoyl-AMP synthase from Actinobacillus pleuropneumoniae serotype 5b (strain L20).